A 446-amino-acid chain; its full sequence is Eukaryotic translation initiation factor 3 subunit E (446 aa).

Residues 240–420 (PLFNDENSRE…GTVVMNHPNS (181 aa)) enclose the PCI domain.

This sequence belongs to the eIF-3 subunit E family. In terms of assembly, component of the eukaryotic translation initiation factor 3 (eIF-3) complex.

The protein resides in the cytoplasm. Its function is as follows. Component of the eukaryotic translation initiation factor 3 (eIF-3) complex, which is involved in protein synthesis of a specialized repertoire of mRNAs and, together with other initiation factors, stimulates binding of mRNA and methionyl-tRNAi to the 40S ribosome. The eIF-3 complex specifically targets and initiates translation of a subset of mRNAs involved in cell proliferation. The polypeptide is Eukaryotic translation initiation factor 3 subunit E (Pyricularia oryzae (strain 70-15 / ATCC MYA-4617 / FGSC 8958) (Rice blast fungus)).